A 381-amino-acid chain; its full sequence is Lysophosphatidylserine lipase ABHD12 (381 aa).

Topologically, residues Met1–Leu58 are cytoplasmic. The helical transmembrane segment at Ile59–Ile79 threads the bilayer. At Gln80–His381 the chain is on the extracellular side. N-linked (GlcNAc...) asparagine glycosylation occurs at Asn106. Catalysis depends on Ser229, which acts as the Nucleophile. Catalysis depends on charge relay system residues Asp316 and His355.

The protein belongs to the serine esterase family.

Its subcellular location is the endoplasmic reticulum membrane. It carries out the reaction 1-(9Z-octadecenoyl)-sn-glycero-3-phospho-L-serine + H2O = sn-glycero-3-phospho-L-serine + (9Z)-octadecenoate + H(+). It catalyses the reaction 1-(9Z-octadecenoyl)-sn-glycero-3-phospho-(1'-sn-glycerol) + H2O = sn-glycero-3-phospho-(1'-sn-glycerol) + (9Z)-octadecenoate + H(+). The catalysed reaction is 1-(9Z-octadecenoyl)-sn-glycero-3-phospho-(1D-myo-inositol) + H2O = sn-glycero-3-phospho-1D-myo-inositol + (9Z)-octadecenoate + H(+). The enzyme catalyses 1-(9Z-octadecenoyl)-sn-glycero-3-phosphoethanolamine + H2O = sn-glycero-3-phosphoethanolamine + (9Z)-octadecenoate + H(+). It carries out the reaction 1-(9Z-octadecenoyl)-sn-glycero-3-phosphocholine + H2O = 1-(9Z-octadecenoyl)-sn-glycerol + phosphocholine + H(+). It catalyses the reaction 2-(9Z-octadecenoyl)-glycerol + H2O = glycerol + (9Z)-octadecenoate + H(+). The catalysed reaction is 1-hexadecanoyl-sn-glycero-3-phospho-L-serine + H2O = sn-glycero-3-phospho-L-serine + hexadecanoate + H(+). The enzyme catalyses 2-(5Z,8Z,11Z,14Z-eicosatetraenoyl)-glycerol + H2O = glycerol + (5Z,8Z,11Z,14Z)-eicosatetraenoate + H(+). It carries out the reaction Hydrolyzes glycerol monoesters of long-chain fatty acids.. It catalyses the reaction 1-decanoylglycerol + H2O = decanoate + glycerol + H(+). The catalysed reaction is 1-dodecanoylglycerol + H2O = dodecanoate + glycerol + H(+). The enzyme catalyses 1-tetradecanoylglycerol + H2O = tetradecanoate + glycerol + H(+). It carries out the reaction 2-hexadecanoylglycerol + H2O = glycerol + hexadecanoate + H(+). It catalyses the reaction 1-(9Z-octadecenoyl)-glycerol + H2O = glycerol + (9Z)-octadecenoate + H(+). The catalysed reaction is 2-(9Z,12Z-octadecadienoyl)-glycerol + H2O = (9Z,12Z)-octadecadienoate + glycerol + H(+). The enzyme catalyses 1-(5Z,8Z,11Z,14Z-eicosatetraenoyl)-glycerol + H2O = glycerol + (5Z,8Z,11Z,14Z)-eicosatetraenoate + H(+). It carries out the reaction 1-(9Z,12Z-octadecadienoyl)-glycerol + H2O = (9Z,12Z)-octadecadienoate + glycerol + H(+). It catalyses the reaction 1-hexadecanoylglycerol + H2O = glycerol + hexadecanoate + H(+). The catalysed reaction is 1-octadecanoylglycerol + H2O = octadecanoate + glycerol + H(+). The enzyme catalyses 1-octadecanoyl-2-(9,10-epoxyoctadecanoyl)-sn-glycero-3-phospho-L-serine + H2O = 9,10-epoxyoctadecanoate + 1-octadecanoyl-sn-glycero-3-phosphoserine + H(+). It carries out the reaction 1-octadecanoyl-2-(10-hydroxyoctadecanoyl)-sn-glycero-3-phospho-L-serine + H2O = 1-octadecanoyl-sn-glycero-3-phosphoserine + 10-hydroxyoctadecanoate + H(+). It catalyses the reaction 1-hexadecanoyl-2-(10-hydroxyoctadecanoyl)-sn-glycero-3-phospho-L-serine + H2O = 10-hydroxyoctadecanoate + 1-hexadecanoyl-sn-glycero-3-phospho-L-serine + H(+). Lysophosphatidylserine (LPS) lipase that mediates the hydrolysis of lysophosphatidylserine, a class of signaling lipids that regulates immunological and neurological processes. Represents a major lysophosphatidylserine lipase in the brain, thereby playing a key role in the central nervous system. Also able to hydrolyze oxidized phosphatidylserine; oxidized phosphatidylserine is produced in response to severe inflammatory stress and constitutes a proapoptotic 'eat me' signal. Also has monoacylglycerol (MAG) lipase activity: hydrolyzes 2-arachidonoylglycerol (2-AG), thereby acting as a regulator of endocannabinoid signaling pathways. Has a strong preference for very-long-chain lipid substrates; substrate specificity is likely due to improved catalysis and not improved substrate binding. This chain is Lysophosphatidylserine lipase ABHD12, found in Gallus gallus (Chicken).